A 420-amino-acid chain; its full sequence is Putative movement protein (420 aa).

Composition is skewed to low complexity over residues 1–18 (MPLTPTPSTRPSRPTSFS) and 30–59 (TSCSSSLRSSPSSSPDSPTSPTSSTTGSCP). 6 disordered regions span residues 1 to 77 (MPLT…TARP), 137 to 181 (SMSR…SARS), 195 to 219 (RPKTSLPSAFRTPSPSPLLPPSTRT), 235 to 281 (IMSE…RPPP), 327 to 370 (PSAG…RPIQ), and 396 to 420 (LPPPSGRVCSPRPLRRPGSPTQPWP). Pro residues predominate over residues 60–69 (KTPPGTPPLP). Residues 137-157 (SMSRRATQPPTTRSRVRPSTG) are compositionally biased toward polar residues. Residues 158–181 (SRPPVSPLVTSSSPSPFSTLSARS) show a composition bias toward low complexity. The span at 253–263 (GLRSASLSTAG) shows a compositional bias: polar residues. Low complexity predominate over residues 327–348 (PSAGSSPFTPTVSGCSASTSSA).

Its function is as follows. Cell-to-cell movement. In Maize rayado fino virus (isolate Costa Rica/Guapiles) (MRFV), this protein is Putative movement protein.